Here is a 510-residue protein sequence, read N- to C-terminus: Lysine--tRNA ligase (510 aa).

Mg(2+) contacts are provided by E420 and E427.

The protein belongs to the class-II aminoacyl-tRNA synthetase family. In terms of assembly, homodimer. Mg(2+) serves as cofactor.

The protein localises to the cytoplasm. The enzyme catalyses tRNA(Lys) + L-lysine + ATP = L-lysyl-tRNA(Lys) + AMP + diphosphate. The sequence is that of Lysine--tRNA ligase from Ralstonia nicotianae (strain ATCC BAA-1114 / GMI1000) (Ralstonia solanacearum).